The primary structure comprises 157 residues: Ubiquitin-like protein 4A (157 aa).

Positions 1 to 76 constitute a Ubiquitin-like domain; sequence MQLTVKALQG…LNLVVKPLEK (76 aa). A Glycyl lysine isopeptide (Lys-Gly) (interchain with G-Cter in ubiquitin) cross-link involves residue Lys48. Position 90 is a phosphoserine (Ser90). Positions 96 to 138 are required and sufficient for interaction with BAG6; the sequence is WQLISKVLARHFSAADASRVLEQLQRDYERSLSRLTLDDIERL.

As to quaternary structure, component of the BAG6/BAT3 complex, at least composed of BAG6, UBL4A and GET4/TRC35. Interacts with BAG6; the interaction is direct and required for UBL4A protein stability. Interacts with USP13; may be indirect via BAG6. Post-translationally, polyubiquitinated. Ubiquitination by AMFR and deubiquitination by USP13 may regulate the interaction between the BAG6/BAT3 complex and SGTA and therefore may regulate client proteins fate.

Its subcellular location is the cytoplasm. The protein resides in the cytosol. The protein localises to the nucleus. Functionally, as part of a cytosolic protein quality control complex, the BAG6/BAT3 complex, maintains misfolded and hydrophobic patches-containing proteins in a soluble state and participates in their proper delivery to the endoplasmic reticulum or alternatively can promote their sorting to the proteasome where they undergo degradation. The BAG6/BAT3 complex is involved in the post-translational delivery of tail-anchored/type II transmembrane proteins to the endoplasmic reticulum membrane. Recruited to ribosomes, it interacts with the transmembrane region of newly synthesized tail-anchored proteins and together with SGTA and ASNA1 mediates their delivery to the endoplasmic reticulum. Client proteins that cannot be properly delivered to the endoplasmic reticulum are ubiquitinated and sorted to the proteasome. Similarly, the BAG6/BAT3 complex also functions as a sorting platform for proteins of the secretory pathway that are mislocalized to the cytosol either delivering them to the proteasome for degradation or to the endoplasmic reticulum. The BAG6/BAT3 complex also plays a role in the endoplasmic reticulum-associated degradation (ERAD), a quality control mechanism that eliminates unwanted proteins of the endoplasmic reticulum through their retrotranslocation to the cytosol and their targeting to the proteasome. It maintains these retrotranslocated proteins in an unfolded yet soluble state condition in the cytosol to ensure their proper delivery to the proteasome. This Homo sapiens (Human) protein is Ubiquitin-like protein 4A.